Reading from the N-terminus, the 172-residue chain is Large ribosomal subunit protein uL10 (172 aa).

It belongs to the universal ribosomal protein uL10 family. As to quaternary structure, part of the ribosomal stalk of the 50S ribosomal subunit. The N-terminus interacts with L11 and the large rRNA to form the base of the stalk. The C-terminus forms an elongated spine to which L12 dimers bind in a sequential fashion forming a multimeric L10(L12)X complex.

Its function is as follows. Forms part of the ribosomal stalk, playing a central role in the interaction of the ribosome with GTP-bound translation factors. The chain is Large ribosomal subunit protein uL10 from Rhodopseudomonas palustris (strain BisB5).